The chain runs to 706 residues: K(+)-insensitive pyrophosphate-energized proton pump (706 aa).

5 helical membrane passes run Met-1–Ala-21, Ile-62–Ile-82, Gly-83–Val-103, Gly-128–Tyr-148, and Val-164–Phe-184. Lys-186 is a substrate binding site. Mg(2+)-binding residues include Asp-189, Asp-193, Asn-216, and Asp-219. 6 helical membrane-spanning segments follow: residues Leu-231 to Ala-251, Thr-261 to Val-281, Ile-298 to Phe-318, Gly-328 to Ile-348, Ile-376 to Leu-398, and Ala-412 to Val-432. Asp-434 provides a ligand contact to Mg(2+). The next 4 helical transmembrane spans lie at Ala-465–Ala-485, Tyr-516–Met-536, Ile-585–Ile-605, and Ala-616–Ile-636. The Ca(2+) site is built by Asp-646, Asp-672, and Asp-676. Lys-679 is a substrate binding site. The chain crosses the membrane as a helical span at residues Ala-685–Ala-705.

The protein belongs to the H(+)-translocating pyrophosphatase (TC 3.A.10) family. K(+)-insensitive subfamily. Homodimer. The cofactor is Mg(2+).

The protein resides in the cell inner membrane. It catalyses the reaction diphosphate + H2O + H(+)(in) = 2 phosphate + 2 H(+)(out). Functionally, proton pump that utilizes the energy of pyrophosphate hydrolysis as the driving force for proton movement across the membrane. Generates a proton motive force. The sequence is that of K(+)-insensitive pyrophosphate-energized proton pump from Bradyrhizobium diazoefficiens (strain JCM 10833 / BCRC 13528 / IAM 13628 / NBRC 14792 / USDA 110).